The primary structure comprises 369 residues: Quinolinate synthase (369 aa).

Residues histidine 47 and serine 64 each coordinate iminosuccinate. Cysteine 111 is a binding site for [4Fe-4S] cluster. Iminosuccinate-binding positions include 142–144 (YVN) and serine 163. Cysteine 231 serves as a coordination point for [4Fe-4S] cluster. Residues 257 to 259 (HPE) and threonine 274 contribute to the iminosuccinate site. [4Fe-4S] cluster is bound at residue cysteine 321.

Belongs to the quinolinate synthase family. Type 3 subfamily. Requires [4Fe-4S] cluster as cofactor.

It is found in the cytoplasm. It catalyses the reaction iminosuccinate + dihydroxyacetone phosphate = quinolinate + phosphate + 2 H2O + H(+). It participates in cofactor biosynthesis; NAD(+) biosynthesis; quinolinate from iminoaspartate: step 1/1. Catalyzes the condensation of iminoaspartate with dihydroxyacetone phosphate to form quinolinate. The protein is Quinolinate synthase of Bacillus licheniformis (strain ATCC 14580 / DSM 13 / JCM 2505 / CCUG 7422 / NBRC 12200 / NCIMB 9375 / NCTC 10341 / NRRL NRS-1264 / Gibson 46).